Consider the following 1215-residue polypeptide: Protein benign gonial cell neoplasm (1215 aa).

One copy of the ANK repeat lies at 407–439 (TGKTAVHFASELNKANHLRLLLFMGADPYIVDL). Thr898 is modified (phosphothreonine).

As to quaternary structure, part of a complex composed of at least mei-P26, bam, bgcn and Sxl; this complex is involved in translational repression of nanos mRNA. Interacts with bam (via C-terminus); the interaction is direct. Interacts with mei-P26; the interaction is direct and does not require bam. Weakly interacts with wh/wuho; this interaction may be required for the function or formation of the mei-P26-bgcn-bam-Sxl complex. Part of a complex composed of at least tut, bam and bgcn; complex formation does not require RNA. Interacts with tut; the interaction is indirect and is mediated by bam. As part of the bam-bgcn-tut complex associates with twin; may recruit the CCR4-NOT1 deadenylation complex to mRNA 3'UTRs to mediate post-transcriptional regulation of expression. As to expression, expressed in testis and in 5-8 germline stem cells of ovaries, immediately adjacent to terminal filament. Expressed in ovarian germline cells throughout the germarium (at protein level).

In terms of biological role, forms a complex with tut and bam involved in 3'UTR-dependent post-transcriptional repression of several 3'-RNA processing factors, which promotes germline stem cell lineage differentiation and mitosis-to-meiosis transition. Part of a complex with bam involved in 3'-UTR-dependent translational repression of a subset of mRNAs, including those for mei-P26, nanos and shg/E-cadherin; may act as a promiscuous RNA-binding protein tethering bam to its target mRNAs. Required for regulating the progression of gonialblast cells through transit amplification and differentiation into gametes. The polypeptide is Protein benign gonial cell neoplasm (Drosophila melanogaster (Fruit fly)).